Consider the following 291-residue polypeptide: Protein US2 (291 aa).

Gly2 bears the N-acetylglycine; by host; partial mark. Residues 251 to 270 form a disordered region; it reads PEVPDEQPTSPGRGPQETDP.

It belongs to the herpesviridae HHV-1 US2 protein family. In terms of assembly, interacts with host KRT18.

It is found in the host cytoplasm. Its subcellular location is the host nucleus. The polypeptide is Protein US2 (Homo sapiens (Human)).